A 509-amino-acid polypeptide reads, in one-letter code: ATP synthase subunit alpha (509 aa).

169 to 176 (GDRQTGKT) provides a ligand contact to ATP.

The protein belongs to the ATPase alpha/beta chains family. As to quaternary structure, F-type ATPases have 2 components, CF(1) - the catalytic core - and CF(0) - the membrane proton channel. CF(1) has five subunits: alpha(3), beta(3), gamma(1), delta(1), epsilon(1). CF(0) has three main subunits: a(1), b(2) and c(9-12). The alpha and beta chains form an alternating ring which encloses part of the gamma chain. CF(1) is attached to CF(0) by a central stalk formed by the gamma and epsilon chains, while a peripheral stalk is formed by the delta and b chains.

It is found in the cell inner membrane. The enzyme catalyses ATP + H2O + 4 H(+)(in) = ADP + phosphate + 5 H(+)(out). Functionally, produces ATP from ADP in the presence of a proton gradient across the membrane. The alpha chain is a regulatory subunit. This Novosphingobium aromaticivorans (strain ATCC 700278 / DSM 12444 / CCUG 56034 / CIP 105152 / NBRC 16084 / F199) protein is ATP synthase subunit alpha.